Consider the following 202-residue polypeptide: NAD(P)H-quinone oxidoreductase subunit I (202 aa).

4Fe-4S ferredoxin-type domains follow at residues 55–84 (GRIHYEFDKCIACEVCVRVCPINLPVVDWV) and 95–124 (KNYSIDFGACIFCGNCVEYCPTNCLSMTEE). The [4Fe-4S] cluster site is built by Cys-64, Cys-67, Cys-70, Cys-74, Cys-104, Cys-107, Cys-110, and Cys-114. The segment covering 168–187 (EYDPHVVPSDRPRAGQRPEE) has biased composition (basic and acidic residues). The segment at 168–202 (EYDPHVVPSDRPRAGQRPEELVDQYKQAAAANEEN) is disordered.

This sequence belongs to the complex I 23 kDa subunit family. NDH-1 is composed of at least 11 different subunits. [4Fe-4S] cluster serves as cofactor.

Its subcellular location is the cellular thylakoid membrane. The enzyme catalyses a plastoquinone + NADH + (n+1) H(+)(in) = a plastoquinol + NAD(+) + n H(+)(out). The catalysed reaction is a plastoquinone + NADPH + (n+1) H(+)(in) = a plastoquinol + NADP(+) + n H(+)(out). In terms of biological role, NDH-1 shuttles electrons from an unknown electron donor, via FMN and iron-sulfur (Fe-S) centers, to quinones in the respiratory and/or the photosynthetic chain. The immediate electron acceptor for the enzyme in this species is believed to be plastoquinone. Couples the redox reaction to proton translocation, and thus conserves the redox energy in a proton gradient. This Synechococcus elongatus (strain ATCC 33912 / PCC 7942 / FACHB-805) (Anacystis nidulans R2) protein is NAD(P)H-quinone oxidoreductase subunit I.